We begin with the raw amino-acid sequence, 433 residues long: Trigger factor (433 aa).

The 86-residue stretch at 161-246 (NDRVIIDFVG…LNKVENMILP (86 aa)) folds into the PPIase FKBP-type domain.

Belongs to the FKBP-type PPIase family. Tig subfamily.

It localises to the cytoplasm. It carries out the reaction [protein]-peptidylproline (omega=180) = [protein]-peptidylproline (omega=0). Involved in protein export. Acts as a chaperone by maintaining the newly synthesized protein in an open conformation. Functions as a peptidyl-prolyl cis-trans isomerase. The chain is Trigger factor from Haemophilus ducreyi (strain 35000HP / ATCC 700724).